Here is a 115-residue protein sequence, read N- to C-terminus: Somatostatin-1 (115 aa).

The N-terminal stretch at 1-24 (MQSCRVQCALTLLSLALAINSISA) is a signal peptide. Residues 25–99 (APTDPRLRQF…NSSPALAPRE (75 aa)) constitute a propeptide that is removed on maturation. The disordered stretch occupies residues 60–79 (SQTDNEALESDDLPRGAEQD). Cysteines 104 and 115 form a disulfide.

Belongs to the somatostatin family.

It is found in the secreted. Somatostatin inhibits the release of somatotropin. The polypeptide is Somatostatin-1 (sst1) (Pelophylax ridibundus (Marsh frog)).